A 186-amino-acid polypeptide reads, in one-letter code: Elongation factor P (186 aa).

It belongs to the elongation factor P family.

The protein localises to the cytoplasm. Its pathway is protein biosynthesis; polypeptide chain elongation. Its function is as follows. Involved in peptide bond synthesis. Stimulates efficient translation and peptide-bond synthesis on native or reconstituted 70S ribosomes in vitro. Probably functions indirectly by altering the affinity of the ribosome for aminoacyl-tRNA, thus increasing their reactivity as acceptors for peptidyl transferase. In Brucella ovis (strain ATCC 25840 / 63/290 / NCTC 10512), this protein is Elongation factor P.